We begin with the raw amino-acid sequence, 196 residues long: Putative NADH dehydrogenase/NAD(P)H nitroreductase Rpal_4764 (196 aa).

Belongs to the nitroreductase family. HadB/RutE subfamily. It depends on FMN as a cofactor.

The sequence is that of Putative NADH dehydrogenase/NAD(P)H nitroreductase Rpal_4764 from Rhodopseudomonas palustris (strain TIE-1).